A 119-amino-acid polypeptide reads, in one-letter code: Large ribosomal subunit protein uL18 (119 aa).

Belongs to the universal ribosomal protein uL18 family. Part of the 50S ribosomal subunit; part of the 5S rRNA/L5/L18/L25 subcomplex. Contacts the 5S and 23S rRNAs.

Its function is as follows. This is one of the proteins that bind and probably mediate the attachment of the 5S RNA into the large ribosomal subunit, where it forms part of the central protuberance. In Roseobacter denitrificans (strain ATCC 33942 / OCh 114) (Erythrobacter sp. (strain OCh 114)), this protein is Large ribosomal subunit protein uL18.